Here is a 260-residue protein sequence, read N- to C-terminus: MALRRPMVAGNWKMNGSAALAQELFKKFASKLQNDSAEVVLCPPSIYLESVRQLLEANKEALDGSLVRMGAQNLSQHDFGAYTGEVSGQMLKDCGCRYVIIGHSERRRMYGETSNIVAEKFAAAQKHGLTPILCVGESGPAREARRTFEVIAEELDIVIQKNGTMAFDNAIIAYEPLWAVGTGKSATPEQAQEVHAFIRKRLSEVSPFIGENIRILYGGSVTPSNAADLFAQPDVDGGLIGGASLNSTEFLSLCTIAMSA.

Position 11–13 (11–13) interacts with substrate; that stretch reads NWK. The active-site Electrophile is His-103. Glu-175 acts as the Proton acceptor in catalysis. Residues Gly-181, Ser-220, and 241-242 each bind substrate; that span reads GG.

The protein belongs to the triosephosphate isomerase family. In terms of assembly, homodimer.

The protein localises to the cytoplasm. The catalysed reaction is D-glyceraldehyde 3-phosphate = dihydroxyacetone phosphate. It participates in carbohydrate biosynthesis; gluconeogenesis. Its pathway is carbohydrate degradation; glycolysis; D-glyceraldehyde 3-phosphate from glycerone phosphate: step 1/1. In terms of biological role, involved in the gluconeogenesis. Catalyzes stereospecifically the conversion of dihydroxyacetone phosphate (DHAP) to D-glyceraldehyde-3-phosphate (G3P). The chain is Triosephosphate isomerase from Shewanella sp. (strain MR-7).